The sequence spans 350 residues: tRNA pseudouridine synthase D (350 aa).

The active-site Nucleophile is Asp79. Residues 154 to 306 form the TRUD domain; the sequence is GAPNYYGPQR…EQERRPIVLY (153 aa).

It belongs to the pseudouridine synthase TruD family.

It carries out the reaction uridine(13) in tRNA = pseudouridine(13) in tRNA. Its function is as follows. Responsible for synthesis of pseudouridine from uracil-13 in transfer RNAs. The chain is tRNA pseudouridine synthase D from Pseudoalteromonas atlantica (strain T6c / ATCC BAA-1087).